A 339-amino-acid chain; its full sequence is Probable N5-carboxyaminoimidazole ribonucleotide mutase (339 aa).

Positions 11, 14, and 41 each coordinate substrate.

Belongs to the AIR carboxylase family. Class I subfamily.

The catalysed reaction is 5-carboxyamino-1-(5-phospho-D-ribosyl)imidazole + H(+) = 5-amino-1-(5-phospho-D-ribosyl)imidazole-4-carboxylate. It functions in the pathway purine metabolism; IMP biosynthesis via de novo pathway; 5-amino-1-(5-phospho-D-ribosyl)imidazole-4-carboxylate from 5-amino-1-(5-phospho-D-ribosyl)imidazole (N5-CAIR route): step 2/2. Functionally, catalyzes the conversion of N5-carboxyaminoimidazole ribonucleotide (N5-CAIR) to 4-carboxy-5-aminoimidazole ribonucleotide (CAIR). The protein is Probable N5-carboxyaminoimidazole ribonucleotide mutase of Methanobrevibacter smithii.